The primary structure comprises 587 residues: Putative ankyrin repeat protein L66 (587 aa).

ANK repeat units follow at residues 77–106 (DKNL…DIRI), 108–136 (NNYP…DVSD), 137–166 (YDNY…DVHC), 168–196 (DNAP…DVNY), 199–228 (NEDL…NIHF), 230–256 (DSLI…ILGN), 259–288 (NIRN…SIEN), 302–331 (FKKN…NVAF), 333–360 (DNLP…NVKI), 361–390 (NYEN…NVKD), 392–418 (TAIY…DLIK), 420–448 (HNEI…INKS), 449–478 (IYDK…DIKS), 480–507 (KFHD…KINN), 509–537 (YKNL…NMKC), and 539–567 (RIDT…KLIC).

The chain is Putative ankyrin repeat protein L66 from Acanthamoeba polyphaga mimivirus (APMV).